The chain runs to 451 residues: Phosphoglucosamine mutase (451 aa).

Residue Ser-103 is the Phosphoserine intermediate of the active site. Residues Ser-103, Asp-243, Asp-245, and Asp-247 each coordinate Mg(2+). Ser-103 carries the phosphoserine modification.

This sequence belongs to the phosphohexose mutase family. The cofactor is Mg(2+). Post-translationally, activated by phosphorylation.

The catalysed reaction is alpha-D-glucosamine 1-phosphate = D-glucosamine 6-phosphate. Catalyzes the conversion of glucosamine-6-phosphate to glucosamine-1-phosphate. The protein is Phosphoglucosamine mutase of Limosilactobacillus reuteri subsp. reuteri (strain JCM 1112) (Lactobacillus reuteri).